A 54-amino-acid polypeptide reads, in one-letter code: Putative neurotoxin-I (54 aa).

Intrachain disulfides connect cysteine 20–cysteine 42, cysteine 28–cysteine 51, and cysteine 32–cysteine 53.

As to expression, expressed by the venom gland.

It is found in the secreted. The chain is Putative neurotoxin-I from Lychas mucronatus (Chinese swimming scorpion).